Consider the following 78-residue polypeptide: Sec-independent protein translocase protein TatA (78 aa).

Residues 1–21 (MGSLSIWHWIVVLAVVLLLFG) traverse the membrane as a helical segment. Residues 43-78 (LAEDDEPAKTPAAPPEAPRPLPHQTSSAAEAEKKPV) form a disordered region. The segment covering 54–63 (AAPPEAPRPL) has biased composition (pro residues).

This sequence belongs to the TatA/E family. In terms of assembly, the Tat system comprises two distinct complexes: a TatABC complex, containing multiple copies of TatA, TatB and TatC subunits, and a separate TatA complex, containing only TatA subunits. Substrates initially bind to the TatABC complex, which probably triggers association of the separate TatA complex to form the active translocon.

Its subcellular location is the cell inner membrane. Part of the twin-arginine translocation (Tat) system that transports large folded proteins containing a characteristic twin-arginine motif in their signal peptide across membranes. TatA could form the protein-conducting channel of the Tat system. This is Sec-independent protein translocase protein TatA from Xanthobacter autotrophicus (strain ATCC BAA-1158 / Py2).